We begin with the raw amino-acid sequence, 646 residues long: MSFLSRQQPPPPRRAGAACTLRQKLIFSPCSDCEEEEEEEEEEGSGHSTGEDSAFQEPDSPLPPARSPTEPGPERRRSPGPAPGSPGELEEDLLLPGACPGADEAGGGAEGDSWEEEGFGSSSPVKSPAAPYFLGSSFSPVRCGGPGDASPRGCGARRAGEGRRSPRPDHPGTPPHKTFRKLRLFDTPHTPKSLLSKARGIDSSSVKLRGSSLFMDTEKSGKREFDVRQTPQVNINPFTPDSLLLHSSGQCRRRKRTYWNDSCGEDMEASDYELEDETRPAKRITITESNMKSRYTTEFHELEKIGSGEFGSVFKCVKRLDGCIYAIKRSKKPLAGSVDEQNALREVYAHAVLGQHSHVVRYFSAWAEDDHMLIQNEYCNGGSLADAISENYRIMSYFKEAELKDLLLQVGRGLRYIHSMSLVHMDIKPSNIFISRTSIPNAASEEGDEDDWASNKVMFKIGDLGHVTRISSPQVEEGDSRFLANEVLQENYTHLPKADIFALALTVVCAAGAEPLPRNGDQWHEIRQGRLPRIPQVLSQEFTELLKVMIHPDPERRPSAMALVKHSVLLSASRKSAEQLRIELNAEKFKNSLLQKELKKAQMAKAAAEERALFTDRMATRSTTQSNRTSRLIGKKMNRSVSLTIY.

A disordered region spans residues 1–181 (MSFLSRQQPP…GTPPHKTFRK (181 aa)). A compositionally biased stretch (acidic residues) spans 32-43 (DCEEEEEEEEEE). S53 is modified (phosphoserine; by PLK1). S78 and S85 each carry phosphoserine. A compositionally biased stretch (low complexity) spans 94-103 (LLPGACPGAD). S123 bears the Phosphoserine; by CDK1 mark. Phosphoserine occurs at positions 127, 137, 139, 150, and 165. Positions 158 to 170 (RAGEGRRSPRPDH) are enriched in basic and acidic residues. Phosphothreonine is present on residues T187, T190, and T239. 3 positions are modified to phosphoserine: S270, S307, and S312. Positions 299–569 (FHELEKIGSG…AMALVKHSVL (271 aa)) constitute a Protein kinase domain. ATP is bound by residues 305-313 (IGSGEFGSV) and K328. N342 contacts Mg(2+). D426 acts as the Proton acceptor in catalysis. Mg(2+) contacts are provided by N431, D463, and G465. S642 is subject to Phosphoserine; by BRSK1 and BRSK2.

The protein belongs to the protein kinase superfamily. Ser/Thr protein kinase family. WEE1 subfamily. Mg(2+) serves as cofactor. In terms of processing, phosphorylated during M and G1 phases. Also autophosphorylated. Phosphorylation at Ser-642 by BRSK1 and BRSK2 in post-mitotic neurons, leads to down-regulate WEE1 activity in polarized neurons. Phosphorylated at Ser-53 and Ser-123 by PLK1 and CDK1, respectively, generating an signal for degradation that can be recognized by the SCF(BTRC) complex, leading to its ubiquitination and degradation at the onset of G2/M phase. Post-translationally, dephosphorylated at Thr-239 by CTDP1. Dephosphorylated at Ser-53 and Ser-123 by the serine/threonine-protein phosphatase 2A preventing its ubiquitin-mediated degradation. Ubiquitinated and degraded at the onset of G2/M phase.

The protein resides in the nucleus. It catalyses the reaction L-tyrosyl-[protein] + ATP = O-phospho-L-tyrosyl-[protein] + ADP + H(+). With respect to regulation, synthesis is increased during S and G2 phases, presumably by an increase in transcription; activity is decreased by phosphorylation during M phase. Protein levels fall in M phase as a result of decreased synthesis combined with degradation. Activity seems to be negatively regulated by phosphorylation upon entry into mitosis, although N-terminal phosphorylation might also regulate the protein stability via protection from proteolysis or might regulate the subcellular location. Functionally, acts as a negative regulator of entry into mitosis (G2 to M transition) by protecting the nucleus from cytoplasmically activated cyclin B1-complexed CDK1 before the onset of mitosis by mediating phosphorylation of CDK1 on 'Tyr-15'. Specifically phosphorylates and inactivates cyclin B1-complexed CDK1 reaching a maximum during G2 phase and a minimum as cells enter M phase. Phosphorylation of cyclin B1-CDK1 occurs exclusively on 'Tyr-15' and phosphorylation of monomeric CDK1 does not occur. Its activity increases during S and G2 phases and decreases at M phase when it is hyperphosphorylated. A correlated decrease in protein level occurs at M/G1 phase, probably due to its degradation. This Homo sapiens (Human) protein is Wee1-like protein kinase.